Reading from the N-terminus, the 499-residue chain is Lysine--tRNA ligase (499 aa).

Mg(2+)-binding residues include glutamate 408 and glutamate 415.

The protein belongs to the class-II aminoacyl-tRNA synthetase family. Homodimer. The cofactor is Mg(2+).

The protein resides in the cytoplasm. It catalyses the reaction tRNA(Lys) + L-lysine + ATP = L-lysyl-tRNA(Lys) + AMP + diphosphate. This is Lysine--tRNA ligase from Bacillus cereus (strain ATCC 10987 / NRS 248).